Reading from the N-terminus, the 265-residue chain is Aquaporin-5 (265 aa).

At 1-12 the chain is on the cytoplasmic side; it reads MKKEVCSVAFFK. A helical transmembrane segment spans residues 13 to 33; sequence AVFAEFLATLIFVFFGLGSAL. Residues 34–39 are Extracellular-facing; sequence KWPSAL. Residues 40 to 60 form a helical membrane-spanning segment; that stretch reads PTILQISIAFGLAIGTLAQAL. Residues 61–65 lie on the Cytoplasmic side of the membrane; that stretch reads GPVSG. The discontinuously helical intramembrane region spans 66-74; the sequence is GHINPAITL. Positions 69–71 match the NPA 1 motif; sequence NPA. Residues 75–87 lie on the Cytoplasmic side of the membrane; it reads ALLIGNQISLLRA. The chain crosses the membrane as a helical span at residues 88 to 108; the sequence is IFYVAAQLVGAIAGAGILYWL. Residues 109–126 lie on the Extracellular side of the membrane; that stretch reads APGNARGNLAVNALSNNT. Asn-124 is a glycosylation site (N-linked (GlcNAc...) asparagine). The helical transmembrane segment at 127 to 147 threads the bilayer; the sequence is TPGKAVVVELILTFQLALCIF. Topologically, residues 148 to 158 are cytoplasmic; that stretch reads SSTDSRRTSPV. Residues 159-179 traverse the membrane as a helical segment; it reads GSPALSIGLSVTLGHLVGIYF. Thr-180 is a topological domain (extracellular). Residues 181 to 191 constitute an intramembrane region (discontinuously helical); that stretch reads GCSMNPARSFG. The NPA 2 signature appears at 185 to 187; sequence NPA. Residues 192–203 lie on the Extracellular side of the membrane; the sequence is PAVVMNRFSPSH. A helical transmembrane segment spans residues 204–224; sequence WVFWVGPIVGAVLAAILYFYL. At 225–265 the chain is on the cytoplasmic side; the sequence is LFPSSLSLHDRVAVVKGTYEPEEDWEDHREERKKTIELTAH.

The protein belongs to the MIP/aquaporin (TC 1.A.8) family. As to quaternary structure, homotetramer; each monomer provides an independent water pore. Interacts with TRPV4; the interaction is probably indirect and regulates TRPV4 activation by hypotonicity. In terms of tissue distribution, detected at the luminal membrane of secretory epithelial cells in hindpaw sweat glands. Detected in acinar cells in salivary glands, in duct cells in lacrimal glands and in lung (at protein level). Detected in lung, parotid, submandibular, sublingual, and lacrimal gland tissues.

Its subcellular location is the apical cell membrane. It is found in the cell membrane. The protein localises to the cytoplasmic vesicle membrane. The enzyme catalyses H2O(in) = H2O(out). Aquaporins form homotetrameric transmembrane channels, with each monomer independently mediating water transport across the plasma membrane along its osmotic gradient. Plays an important role in fluid secretion in salivary glands. Required for TRPV4 activation by hypotonicity. Together with TRPV4, controls regulatory volume decrease in salivary epithelial cells. Seems to play a redundant role in water transport in the eye, lung and in sweat glands. The polypeptide is Aquaporin-5 (Mus musculus (Mouse)).